Consider the following 30-residue polypeptide: Cyclotide cter-O (30 aa).

Positions 1–30 (GIPCGESCVFIPCITGIAGCSCKSKVCYRN) form a cross-link, cyclopeptide (Gly-Asn). 3 disulfides stabilise this stretch: Cys4-Cys20, Cys8-Cys22, and Cys13-Cys27.

Post-translationally, this is a cyclic peptide.

It is found in the secreted. Its function is as follows. Probably participates in a plant defense mechanism. The chain is Cyclotide cter-O from Clitoria ternatea (Butterfly pea).